The sequence spans 162 residues: NADH-ubiquinone oxidoreductase chain 6 (162 aa).

4 helical membrane passes run 1-21, 46-66, 84-104, and 130-150; these read MIFY…FYSL, FSFI…VVFV, EILV…DPLI, and GGYL…ALVL.

This sequence belongs to the complex I subunit 6 family.

The protein resides in the mitochondrion membrane. The enzyme catalyses a ubiquinone + NADH + 5 H(+)(in) = a ubiquinol + NAD(+) + 4 H(+)(out). Its function is as follows. Core subunit of the mitochondrial membrane respiratory chain NADH dehydrogenase (Complex I) that is believed to belong to the minimal assembly required for catalysis. Complex I functions in the transfer of electrons from NADH to the respiratory chain. The immediate electron acceptor for the enzyme is believed to be ubiquinone. This is NADH-ubiquinone oxidoreductase chain 6 (ND6) from Patiria pectinifera (Starfish).